We begin with the raw amino-acid sequence, 150 residues long: Large ribosomal subunit protein uL15 (150 aa).

Basic and acidic residues predominate over residues 1–13 (MADNDAIKVHDLR). The disordered stretch occupies residues 1 to 44 (MADNDAIKVHDLRPAPGAKTAKTRVGRGEASKGKTAGRGTKGTK).

Belongs to the universal ribosomal protein uL15 family. As to quaternary structure, part of the 50S ribosomal subunit.

In terms of biological role, binds to the 23S rRNA. The sequence is that of Large ribosomal subunit protein uL15 from Micrococcus luteus (strain ATCC 4698 / DSM 20030 / JCM 1464 / CCM 169 / CCUG 5858 / IAM 1056 / NBRC 3333 / NCIMB 9278 / NCTC 2665 / VKM Ac-2230) (Micrococcus lysodeikticus).